We begin with the raw amino-acid sequence, 479 residues long: GTPase Obg (479 aa).

The Obg domain maps to 2-159; sequence PRFVDRVVIH…RDLTLELKTV (158 aa). The 181-residue stretch at 160–340 folds into the OBG-type G domain; the sequence is ADVGLVGFPS…LIFGLSQMIS (181 aa). GTP is bound by residues 166-173, 191-195, 212-215, 292-295, and 321-323; these read GFPSAGKS, FTTLV, DVPG, NKID, and STA. Mg(2+) is bound by residues Ser173 and Thr193. Positions 358-436 constitute an OCT domain; the sequence is PIPVDDSGFT…IGEMTFDWEP (79 aa). The interval 434–479 is disordered; that stretch reads WEPQTPAGEPVAMSGRGTDPRLDSNKRVGAAERKAARSRRREHGDG. A compositionally biased stretch (basic and acidic residues) spans 451 to 468; the sequence is TDPRLDSNKRVGAAERKA. Residues 469–479 show a composition bias toward basic residues; the sequence is ARSRRREHGDG.

Belongs to the TRAFAC class OBG-HflX-like GTPase superfamily. OBG GTPase family. In terms of assembly, monomer. Mg(2+) is required as a cofactor.

The protein localises to the cytoplasm. An essential GTPase which binds GTP, GDP and possibly (p)ppGpp with moderate affinity, with high nucleotide exchange rates and a fairly low GTP hydrolysis rate. Plays a role in control of the cell cycle, stress response, ribosome biogenesis and in those bacteria that undergo differentiation, in morphogenesis control. The sequence is that of GTPase Obg from Mycobacterium tuberculosis (strain ATCC 25177 / H37Ra).